We begin with the raw amino-acid sequence, 317 residues long: 1-phosphofructokinase (317 aa).

ATP-binding positions include 223-228 (SMGAEG) and 254-255 (GD). Catalysis depends on Asp255, which acts as the Proton acceptor.

This sequence belongs to the carbohydrate kinase PfkB family.

It carries out the reaction beta-D-fructose 1-phosphate + ATP = beta-D-fructose 1,6-bisphosphate + ADP + H(+). Its function is as follows. Catalyzes the ATP-dependent phosphorylation of fructose-l-phosphate to fructose-l,6-bisphosphate. The polypeptide is 1-phosphofructokinase (Vibrio cholerae serotype O1 (strain ATCC 39315 / El Tor Inaba N16961)).